The chain runs to 858 residues: Beta-galactosidase 6 (858 aa).

Residues 1–30 form the signal peptide; sequence MAAATVGVLLRLLLLPVVVVVSLLVGASRA. N-linked (GlcNAc...) asparagine glycosylation is present at Asn32. Glu189 acts as the Proton donor in catalysis. The Nucleophile role is filled by Glu258. N-linked (GlcNAc...) asparagine glycans are attached at residues Asn259, Asn482, Asn507, Asn595, and Asn830. The 87-residue stretch at 772–858 folds into the SUEL-type lectin domain; sequence QTQGPALRLE…KSLVVEAACS (87 aa).

Belongs to the glycosyl hydrolase 35 family.

The protein resides in the secreted. Its subcellular location is the extracellular space. It is found in the apoplast. It catalyses the reaction Hydrolysis of terminal non-reducing beta-D-galactose residues in beta-D-galactosides.. Its function is as follows. Releases galactose by hydrolysis of plant cell wall galactose-containing polysaccharides such as galacto-xyloglucan, pectic galactan and galactan (in vitro). This chain is Beta-galactosidase 6, found in Oryza sativa subsp. japonica (Rice).